The sequence spans 171 residues: Orange carotenoid-binding domain-containing protein (171 aa).

In terms of domain architecture, OCP N-terminal spans 21–171 (GDAVASTITV…ADMGVDPLAD (151 aa)).

This sequence belongs to the orange carotenoid-binding protein family. The cofactor is 3'-hydroxyechinenone.

It localises to the cellular thylakoid membrane. In terms of biological role, might act as a photo-protectant, protecting against damage induced by excess light via a process known as non-photochemical quenching (NPQ). The protein is Orange carotenoid-binding domain-containing protein of Nostoc sp. (strain PCC 7120 / SAG 25.82 / UTEX 2576).